The chain runs to 153 residues: 6,7-dimethyl-8-ribityllumazine synthase (153 aa).

5-amino-6-(D-ribitylamino)uracil contacts are provided by residues Phe22, 56-58 (AFE), and 80-82 (AVI). 85–86 (ST) is a binding site for (2S)-2-hydroxy-3-oxobutyl phosphate. Catalysis depends on His88, which acts as the Proton donor. Phe113 serves as a coordination point for 5-amino-6-(D-ribitylamino)uracil. Arg127 serves as a coordination point for (2S)-2-hydroxy-3-oxobutyl phosphate.

It belongs to the DMRL synthase family.

The catalysed reaction is (2S)-2-hydroxy-3-oxobutyl phosphate + 5-amino-6-(D-ribitylamino)uracil = 6,7-dimethyl-8-(1-D-ribityl)lumazine + phosphate + 2 H2O + H(+). Its pathway is cofactor biosynthesis; riboflavin biosynthesis; riboflavin from 2-hydroxy-3-oxobutyl phosphate and 5-amino-6-(D-ribitylamino)uracil: step 1/2. Catalyzes the formation of 6,7-dimethyl-8-ribityllumazine by condensation of 5-amino-6-(D-ribitylamino)uracil with 3,4-dihydroxy-2-butanone 4-phosphate. This is the penultimate step in the biosynthesis of riboflavin. The sequence is that of 6,7-dimethyl-8-ribityllumazine synthase from Fusobacterium nucleatum subsp. nucleatum (strain ATCC 25586 / DSM 15643 / BCRC 10681 / CIP 101130 / JCM 8532 / KCTC 2640 / LMG 13131 / VPI 4355).